The primary structure comprises 381 residues: Carbamoyl phosphate synthase small chain (381 aa).

Residues 1 to 192 are CPSase; that stretch reads MSKPAILALE…SGYADVSQGD (192 aa). The L-glutamine site is built by S47, G244, and G246. The region spanning 196–381 is the Glutamine amidotransferase type-1 domain; the sequence is HVVAYDYGMK…RFVEMMRHRR (186 aa). Catalysis depends on C272, which acts as the Nucleophile. The L-glutamine site is built by L273, Q276, N314, G316, and F317. Residues H356 and E358 contribute to the active site.

Belongs to the CarA family. As to quaternary structure, composed of two chains; the small (or glutamine) chain promotes the hydrolysis of glutamine to ammonia, which is used by the large (or ammonia) chain to synthesize carbamoyl phosphate. Tetramer of heterodimers (alpha,beta)4.

The enzyme catalyses hydrogencarbonate + L-glutamine + 2 ATP + H2O = carbamoyl phosphate + L-glutamate + 2 ADP + phosphate + 2 H(+). It carries out the reaction L-glutamine + H2O = L-glutamate + NH4(+). The protein operates within amino-acid biosynthesis; L-arginine biosynthesis; carbamoyl phosphate from bicarbonate: step 1/1. Its pathway is pyrimidine metabolism; UMP biosynthesis via de novo pathway; (S)-dihydroorotate from bicarbonate: step 1/3. Functionally, small subunit of the glutamine-dependent carbamoyl phosphate synthetase (CPSase). CPSase catalyzes the formation of carbamoyl phosphate from the ammonia moiety of glutamine, carbonate, and phosphate donated by ATP, constituting the first step of 2 biosynthetic pathways, one leading to arginine and/or urea and the other to pyrimidine nucleotides. The small subunit (glutamine amidotransferase) binds and cleaves glutamine to supply the large subunit with the substrate ammonia. This Halomonas eurihalina protein is Carbamoyl phosphate synthase small chain.